Here is a 248-residue protein sequence, read N- to C-terminus: 3-oxoacyl-[acyl-carrier-protein] reductase FabG (248 aa).

NADP(+)-binding positions include 14 to 17 (GSTR), Thr-39, 65 to 66 (NL), and Asn-92. Ser-144 is a substrate binding site. Tyr-157 functions as the Proton acceptor in the catalytic mechanism. Residues 157–161 (YSTTK) and Ile-190 each bind NADP(+).

Belongs to the short-chain dehydrogenases/reductases (SDR) family. Homotetramer.

The enzyme catalyses a (3R)-hydroxyacyl-[ACP] + NADP(+) = a 3-oxoacyl-[ACP] + NADPH + H(+). It participates in lipid metabolism; fatty acid biosynthesis. Catalyzes the NADPH-dependent reduction of beta-ketoacyl-ACP substrates to beta-hydroxyacyl-ACP products, the first reductive step in the elongation cycle of fatty acid biosynthesis. The sequence is that of 3-oxoacyl-[acyl-carrier-protein] reductase FabG (fabG) from Aquifex aeolicus (strain VF5).